We begin with the raw amino-acid sequence, 157 residues long: Ribosome maturation factor RimP (157 aa).

The protein belongs to the RimP family.

The protein resides in the cytoplasm. Required for maturation of 30S ribosomal subunits. In Thermobifida fusca (strain YX), this protein is Ribosome maturation factor RimP.